The following is a 148-amino-acid chain: MAASGMLISNPSNVCFRKPQFSCSLKPKATVSELGFLTSQLSGIQISPSPLFPIISKPISAPLKPSLQPVARRICPFTGKKSNKANRVSHSNHKTKRLQFVNLQYKRVWWEAGKRFVKLRLSTKALKTIEKNGLDAVAKKAGIDLRKE.

Residues 1–71 constitute a chloroplast transit peptide; it reads MAASGMLISN…PLKPSLQPVA (71 aa).

As to quaternary structure, component of the chloroplast large ribosomal subunit (LSU). Mature 70S chloroplast ribosomes of higher plants consist of a small (30S) and a large (50S) subunit. The 30S small subunit contains 1 molecule of ribosomal RNA (16S rRNA) and 24 different proteins. The 50S large subunit contains 3 rRNA molecules (23S, 5S and 4.5S rRNA) and 33 different proteins.

The protein localises to the plastid. The protein resides in the chloroplast. Component of the chloroplast ribosome (chloro-ribosome), a dedicated translation machinery responsible for the synthesis of chloroplast genome-encoded proteins, including proteins of the transcription and translation machinery and components of the photosynthetic apparatus. The chain is Large ribosomal subunit protein bL28c (RPL28) from Spinacia oleracea (Spinach).